A 213-amino-acid chain; its full sequence is Large ribosomal subunit protein uL1 (213 aa).

Belongs to the universal ribosomal protein uL1 family. Part of the 50S ribosomal subunit.

Its function is as follows. Probably involved in E site tRNA release. Binds directly to 23S rRNA. Functionally, protein L1 is also a translational repressor protein, it controls the translation of its operon by binding to its mRNA. The polypeptide is Large ribosomal subunit protein uL1 (Methanothermococcus thermolithotrophicus (Methanococcus thermolithotrophicus)).